The following is a 404-amino-acid chain: Probable eukaryotic initiation factor 4A (404 aa).

Positions 1 to 28 are disordered; sequence MAQQGKVEPQDQDSFLDDQPGIRPIPSF. A Q motif motif is present at residues 26 to 54; sequence PSFDDMPLHQNLLRGIYSHGFEKPSSIQQ. The 175-residue stretch at 57 to 231 folds into the Helicase ATP-binding domain; the sequence is IVPFTRGGDI…KKFMRDPTRI (175 aa). 70-77 provides a ligand contact to ATP; the sequence is AQSGTGKT. Residues 179 to 182 carry the DEAD box motif; sequence DEAD. One can recognise a Helicase C-terminal domain in the interval 242 to 402; that stretch reads GIKQYFIAVE…ELPVDFAAYL (161 aa).

Belongs to the DEAD box helicase family. eIF4A subfamily. In terms of assembly, eIF4F is a multi-subunit complex, the composition of which varies with external and internal environmental conditions. It is composed of at least EIF4A, EIF4E and EIF4G.

It carries out the reaction ATP + H2O = ADP + phosphate + H(+). ATP-dependent RNA helicase which is a subunit of the eIF4F complex involved in cap recognition and is required for mRNA binding to ribosome. In the current model of translation initiation, eIF4A unwinds RNA secondary structures in the 5'-UTR of mRNAs which is necessary to allow efficient binding of the small ribosomal subunit, and subsequent scanning for the initiator codon. In Trypanosoma cruzi (strain CL Brener), this protein is Probable eukaryotic initiation factor 4A.